The following is a 411-amino-acid chain: LIM domain-binding protein 1 (411 aa).

An N-acetylserine modification is found at serine 2. Threonine 61 is modified (phosphothreonine). Phosphoserine is present on residues serine 265 and serine 302. Disordered regions lie at residues 284–330 (PPAE…TFAL) and 367–411 (DAAN…QASQ). The segment covering 302-318 (SGGSTMSSGGGNTNNSN) has biased composition (low complexity). The LIM interaction domain (LID) domain occupies 336-375 (DVMVVGEPTLMGGEFGDEDERLITRLENTQFDAANGIDDE).

Belongs to the LDB family. In terms of assembly, interacts with ESR1. Forms homodimers and heterodimers. Interacts with and activates LHX1/LIM1. Interacts with the LIM domains of ISL1 and LMO2. Can assemble in a complex with LMO2 and TAL1/SCL but does not interact with TAL1/SCL directly. Strongly interacts with the LIM2 domain of LMX1A and more weakly with the LIM1 domain. Homodimerization is not required for, and does not effect, LMX1A-binding. Component of a nuclear TAL-1 complex composed at least of CBFA2T3, LDB1, TAL1 and TCF3. Interacts with LHX6 and LHX9. At neuronal promoters, forms a complex with LHX3 involved in the specification of interneurons, in motor neurons, it is displaced by ISL1 to form a ternary complex in which ISL1 contacts both LHX3 and LDB1. Interacts with SLK; leading to negatively regulate SLK kinase activity. Interacts with YWHAZ. Interacts with PRDM1/BLIMP1. Interacts with LMO4. Interacts with RLIM/RNF12; the interaction inhibits the ubiquitination of LMO proteins. In terms of processing, ubiquitinated by RLIM/RNF12, leading to its degradation by the proteasome. In terms of tissue distribution, expressed in multiple adult tissues including heart, brain, liver, kidney, testis, lung and muscle, with expression highest in the pituitary gland and skin.

Its subcellular location is the nucleus. Its function is as follows. Binds to the LIM domain of a wide variety of LIM domain-containing transcription factors. May regulate the transcriptional activity of LIM-containing proteins by determining specific partner interactions. Plays a role in the development of interneurons and motor neurons in cooperation with LHX3 and ISL1. Acts synergistically with LHX1/LIM1 in axis formation and activation of gene expression. Acts with LMO2 in the regulation of red blood cell development, maintaining erythroid precursors in an immature state. The chain is LIM domain-binding protein 1 (Ldb1) from Mus musculus (Mouse).